A 489-amino-acid polypeptide reads, in one-letter code: Betaine aldehyde dehydrogenase (489 aa).

Positions 26 and 93 each coordinate K(+). Position 150–152 (150–152) interacts with NAD(+); sequence GAW. K162 acts as the Charge relay system in catalysis. Residue 176-179 coordinates NAD(+); that stretch reads KPSE. A K(+)-binding site is contributed by V180. Residue 229-232 coordinates NAD(+); sequence GVET. K(+) is bound at residue L245. E251 serves as the catalytic Proton acceptor. Residues G253, C285, and E386 each coordinate NAD(+). C285 (nucleophile) is an active-site residue. C285 bears the Cysteine sulfenic acid (-SOH) mark. The K(+) site is built by K456 and G459. E463 serves as the catalytic Charge relay system.

This sequence belongs to the aldehyde dehydrogenase family. As to quaternary structure, dimer of dimers. It depends on K(+) as a cofactor.

It carries out the reaction betaine aldehyde + NAD(+) + H2O = glycine betaine + NADH + 2 H(+). It functions in the pathway amine and polyamine biosynthesis; betaine biosynthesis via choline pathway; betaine from betaine aldehyde: step 1/1. In terms of biological role, involved in the biosynthesis of the osmoprotectant glycine betaine. Catalyzes the irreversible oxidation of betaine aldehyde to the corresponding acid. In Burkholderia lata (strain ATCC 17760 / DSM 23089 / LMG 22485 / NCIMB 9086 / R18194 / 383), this protein is Betaine aldehyde dehydrogenase.